A 383-amino-acid chain; its full sequence is tRNA (guanine-N(7)-)-methyltransferase non-catalytic subunit wuho (383 aa).

WD repeat units follow at residues 61–101 (NLEV…ALLL), 105–144 (ALAR…APPK), 148–187 (GHLS…DIHS), 191–231 (GHKE…EVLQ), and 289–329 (AGSW…QAES).

It belongs to the WD repeat TRM82 family. As to quaternary structure, forms a heterodimer with the catalytic subunit Mettl1. Interacts with mei-P26 and weakly interacts with bgcn; required for the function or formation of the mei-P26-bgcn-bam-sxl complex. Interacts with nanos; may be involved in mei-P26-dependent derepression of the BMP signaling pathway. Interacts with Myc; the interaction may be mediated by mei-P26 and may be involved in the regulation of ribosome biogenesis. As to expression, in testis, it is present at high level in hub cells, a niche for germline stem cells of testis. Ubiquitously expressed in all testicular cells throughout spermatogenesis. Ubiquitously expressed in all germline and somatic cells of the ovary.

The protein localises to the nucleus. It localises to the cytoplasm. It functions in the pathway tRNA modification; N(7)-methylguanine-tRNA biosynthesis. Functionally, required for the Mettl1-dependent formation of N(7)-methylguanine at position 46 (m7G46) in tRNA. In the Mettl1-wuho methyltransferase complex, it is required to stabilize and induce conformational changes of the catalytic subunit. Required for binding of nanos mRNA and repression of translation by the mei-P26-bgcn-bam-sxl complex. May cooperate with mei-P26 and nanos to derepress the BMP signaling pathway. May cooperate with mei-P26 to suppress expression of a subset of microRNAs. May cooperate with mei-P26 to regulate bam expression levels in germline cells during gametogenesis. Required to promote mitosis to meiosis transition during gametogenesis. May regulate germline cell division in part by regulating ribosome biogenesis. This Drosophila mojavensis (Fruit fly) protein is tRNA (guanine-N(7)-)-methyltransferase non-catalytic subunit wuho.